The primary structure comprises 86 residues: Small ribosomal subunit protein bS20 (86 aa).

Belongs to the bacterial ribosomal protein bS20 family.

Binds directly to 16S ribosomal RNA. The chain is Small ribosomal subunit protein bS20 from Bifidobacterium adolescentis (strain ATCC 15703 / DSM 20083 / NCTC 11814 / E194a).